The sequence spans 356 residues: Histidinol-phosphate aminotransferase (356 aa).

At Lys211 the chain carries N6-(pyridoxal phosphate)lysine.

Belongs to the class-II pyridoxal-phosphate-dependent aminotransferase family. Histidinol-phosphate aminotransferase subfamily. In terms of assembly, homodimer. Pyridoxal 5'-phosphate is required as a cofactor.

It carries out the reaction L-histidinol phosphate + 2-oxoglutarate = 3-(imidazol-4-yl)-2-oxopropyl phosphate + L-glutamate. It participates in amino-acid biosynthesis; L-histidine biosynthesis; L-histidine from 5-phospho-alpha-D-ribose 1-diphosphate: step 7/9. The polypeptide is Histidinol-phosphate aminotransferase (Blochmanniella floridana).